We begin with the raw amino-acid sequence, 155 residues long: Snaclec clone 2100755 (155 aa).

The first 23 residues, 1-23 (MGRFIFVSFGLLVVFLSLSGTAA), serve as a signal peptide directing secretion. Disulfide bonds link Cys-25/Cys-36, Cys-53/Cys-144, and Cys-119/Cys-136. Positions 32 to 145 (YDGHCYQVFS…CEKSVSFVCK (114 aa)) constitute a C-type lectin domain.

This sequence belongs to the snaclec family. As to quaternary structure, heterodimer; disulfide-linked.

It localises to the secreted. In terms of biological role, interferes with one step of hemostasis (modulation of platelet aggregation, or coagulation cascade, for example). In Deinagkistrodon acutus (Hundred-pace snake), this protein is Snaclec clone 2100755.